Reading from the N-terminus, the 127-residue chain is Fluoride-specific ion channel FluC (127 aa).

The next 4 helical transmembrane spans lie at 4-24, 35-55, 71-91, and 103-123; these read LLLA…LLSM, LGTL…FAWF, TGFC…VFLL, and VFVN…LFSA. Na(+) contacts are provided by G75 and T78.

This sequence belongs to the fluoride channel Fluc/FEX (TC 1.A.43) family.

Its subcellular location is the cell inner membrane. It catalyses the reaction fluoride(in) = fluoride(out). With respect to regulation, na(+) is not transported, but it plays an essential structural role and its presence is essential for fluoride channel function. Functionally, fluoride-specific ion channel. Important for reducing fluoride concentration in the cell, thus reducing its toxicity. The chain is Fluoride-specific ion channel FluC from Escherichia coli O81 (strain ED1a).